A 419-amino-acid chain; its full sequence is NFATC2-interacting protein (419 aa).

2 disordered regions span residues 1–131 (MAEP…GKVK) and 151–215 (DEEE…HTRA). The segment covering 11 to 27 (WSGGSGAGRGGRGGWGG) has biased composition (gly residues). Positions 35-51 (QRSPSRGTLDVVSVDLV) are enriched in low complexity. A phosphoserine mark is found at S54, S84, S88, S90, S92, and S127. Residues K129 and K131 each participate in a glycyl lysine isopeptide (Lys-Gly) (interchain with G-Cter in SUMO2) cross-link. Positions 180–192 (RTKDKEEKKKTEF) are enriched in basic and acidic residues. Residues S198, S201, S204, S220, and S314 each carry the phosphoserine modification. The stretch at 209–231 (SRTHTRALKKLSEVNKRLQDLRS) forms a coiled coil. Phosphothreonine is present on residues T316 and T318. The Ubiquitin-like domain occupies 348-419 (LQLRVQGKEK…ESGDLIEVWG (72 aa)). 2 positions are modified to phosphoserine: S369 and S390.

As to quaternary structure, interacts with NFATC2, TRAF1, TRAF2 and PRMT1. Interacts with UBE2I/UBC9. In terms of processing, methylation at the N-terminus by PRMT1 modulates interaction with the NFAT complex and results in augmented cytokine production.

Its subcellular location is the nucleus. The protein resides in the cytoplasm. In terms of biological role, in T-helper 2 (Th2) cells, regulates the magnitude of NFAT-driven transcription of a specific subset of cytokine genes, including IL3, IL4, IL5 and IL13, but not IL2. Recruits PRMT1 to the IL4 promoter; this leads to enhancement of histone H4 'Arg-3'-methylation and facilitates subsequent histone acetylation at the IL4 locus, thus promotes robust cytokine expression. Down-regulates formation of poly-SUMO chains by UBE2I/UBC9. The protein is NFATC2-interacting protein (NFATC2IP) of Homo sapiens (Human).